The sequence spans 145 residues: D-aminoacyl-tRNA deacylase (145 aa).

Positions 137–138 match the Gly-cisPro motif, important for rejection of L-amino acids motif; that stretch reads GP.

The protein belongs to the DTD family. In terms of assembly, homodimer.

The protein localises to the cytoplasm. It carries out the reaction glycyl-tRNA(Ala) + H2O = tRNA(Ala) + glycine + H(+). It catalyses the reaction a D-aminoacyl-tRNA + H2O = a tRNA + a D-alpha-amino acid + H(+). Its function is as follows. An aminoacyl-tRNA editing enzyme that deacylates mischarged D-aminoacyl-tRNAs. Also deacylates mischarged glycyl-tRNA(Ala), protecting cells against glycine mischarging by AlaRS. Acts via tRNA-based rather than protein-based catalysis; rejects L-amino acids rather than detecting D-amino acids in the active site. By recycling D-aminoacyl-tRNA to D-amino acids and free tRNA molecules, this enzyme counteracts the toxicity associated with the formation of D-aminoacyl-tRNA entities in vivo and helps enforce protein L-homochirality. The chain is D-aminoacyl-tRNA deacylase from Pseudomonas aeruginosa (strain UCBPP-PA14).